We begin with the raw amino-acid sequence, 69 residues long: MLLYIVIIVACIISKLVPNEYWAIHLFFIIMIFMVYMYKKLDIHQKYQFWNYTMSGLSGHNVQVTCKCY.

At 1–15 the chain is on the cytoplasmic side; sequence MLLYIVIIVACIISK. Residues 16-36 traverse the membrane as a helical segment; it reads LVPNEYWAIHLFFIIMIFMVY. The Extracellular segment spans residues 37-69; sequence MYKKLDIHQKYQFWNYTMSGLSGHNVQVTCKCY. N-linked (GlcNAc...) asparagine; by host glycosylation occurs at N51.

Belongs to the asfivirus X69R family.

Its subcellular location is the host membrane. This is an uncharacterized protein from African swine fever virus (isolate Tick/Malawi/Lil 20-1/1983) (ASFV).